The following is a 289-amino-acid chain: Glycine--tRNA ligase alpha subunit (289 aa).

It belongs to the class-II aminoacyl-tRNA synthetase family. Tetramer of two alpha and two beta subunits.

It localises to the cytoplasm. It catalyses the reaction tRNA(Gly) + glycine + ATP = glycyl-tRNA(Gly) + AMP + diphosphate. This Rickettsia typhi (strain ATCC VR-144 / Wilmington) protein is Glycine--tRNA ligase alpha subunit.